The chain runs to 315 residues: Carbamate kinase (315 aa).

Belongs to the carbamate kinase family. As to quaternary structure, homodimer.

The protein localises to the cytoplasm. The enzyme catalyses hydrogencarbonate + NH4(+) + ATP = carbamoyl phosphate + ADP + H2O + H(+). The chain is Carbamate kinase (cpkA) from Thermococcus kodakarensis (strain ATCC BAA-918 / JCM 12380 / KOD1) (Pyrococcus kodakaraensis (strain KOD1)).